Reading from the N-terminus, the 296-residue chain is Pre-mRNA-splicing factor CWC23 (296 aa).

The J domain occupies 14-86 (DLYKLLELNY…AKKAEYDQWV (73 aa)).

Belongs to the DnaJ family. As to quaternary structure, associated with the spliceosome.

It localises to the cytoplasm. Its subcellular location is the nucleus. In terms of biological role, involved in pre-mRNA splicing. May be involved in endoplasmic reticulum-associated protein degradation (ERAD) and required for growth at low and high temperatures. The polypeptide is Pre-mRNA-splicing factor CWC23 (CWC23) (Candida glabrata (strain ATCC 2001 / BCRC 20586 / JCM 3761 / NBRC 0622 / NRRL Y-65 / CBS 138) (Yeast)).